The sequence spans 330 residues: Carbonic anhydrase (330 aa).

A chloroplast transit peptide-like region spans residues 1 to 109 (MSAASAFAMN…AATRIDQITA (109 aa)).

Belongs to the beta-class carbonic anhydrase family.

It is found in the cytoplasm. The catalysed reaction is hydrogencarbonate + H(+) = CO2 + H2O. Its function is as follows. Reversible hydration of carbon dioxide. The sequence is that of Carbonic anhydrase from Flaveria bidentis (Coastal plain yellowtops).